The primary structure comprises 486 residues: Arginine deiminase (486 aa).

Residue cysteine 476 is the Amidino-cysteine intermediate of the active site.

The protein belongs to the arginine deiminase family.

The protein localises to the cytoplasm. The catalysed reaction is L-arginine + H2O = L-citrulline + NH4(+). It functions in the pathway amino-acid degradation; L-arginine degradation via ADI pathway; carbamoyl phosphate from L-arginine: step 1/2. Functionally, involved in the arginine deiminase pathway of fermentative arginine utilization. This is Arginine deiminase (arcA) from Halobacterium salinarum (strain ATCC 29341 / DSM 671 / R1).